A 104-amino-acid chain; its full sequence is N(4)-acetylcytidine amidohydrolase (104 aa).

The region spanning 7–93 (MTFFSRFEAD…EVIQEIYPGI (87 aa)) is the ASCH domain. Residue lysine 22 is the Proton acceptor of the active site. The Nucleophile role is filled by threonine 25. Glutamate 75 functions as the Proton donor in the catalytic mechanism.

Belongs to the N(4)-acetylcytidine amidohydrolase family.

The catalysed reaction is N(4)-acetylcytidine + H2O = cytidine + acetate + H(+). It catalyses the reaction N(4)-acetyl-2'-deoxycytidine + H2O = 2'-deoxycytidine + acetate + H(+). It carries out the reaction N(4)-acetylcytosine + H2O = cytosine + acetate + H(+). Its function is as follows. Catalyzes the hydrolysis of N(4)-acetylcytidine (ac4C). This Vibrio vulnificus (strain YJ016) protein is N(4)-acetylcytidine amidohydrolase.